Reading from the N-terminus, the 597-residue chain is Probable tyrosine-protein phosphatase (597 aa).

The span at 55 to 81 shows a compositional bias: low complexity; it reads VSSSSDAAPTSISTTTTSTTSMTDASA. 3 disordered regions span residues 55–89, 107–172, and 188–228; these read VSSSSDAAPTSISTTTTSTTSMTDASANADNQQVY, SFSI…PNSL, and STNG…GNNN. The span at 107–126 shows a compositional bias: polar residues; the sequence is SFSIQPNQTPTMLPTSSYTL. Low complexity predominate over residues 136-151; it reads TSSISSISSTSSNSTS. Composition is skewed to polar residues over residues 188–206 and 216–228; these read STNGYTSPLPKSTNSNQPR and KKSTPVNRIGNNN. The region spanning 428–579 is the Tyrosine-protein phosphatase domain; sequence GPKNVLNNLI…LMEFGDKLNN (152 aa). Residue Cys516 is the Phosphocysteine intermediate of the active site.

The protein belongs to the protein-tyrosine phosphatase family. Non-receptor class dual specificity subfamily.

It carries out the reaction O-phospho-L-tyrosyl-[protein] + H2O = L-tyrosyl-[protein] + phosphate. The protein is Probable tyrosine-protein phosphatase (CPP1) of Candida albicans (strain WO-1) (Yeast).